The following is a 309-amino-acid chain: DNA-directed RNA polymerase subunit alpha (309 aa).

The alpha N-terminal domain (alpha-NTD) stretch occupies residues 1-225 (MFQVQCLESA…SLFKLVNSAD (225 aa)). The interval 237–309 (IVQVSQTDVT…LHERFNLTLN (73 aa)) is alpha C-terminal domain (alpha-CTD).

The protein belongs to the RNA polymerase alpha chain family. In terms of assembly, in plastids the minimal PEP RNA polymerase catalytic core is composed of four subunits: alpha, beta, beta', and beta''. When a (nuclear-encoded) sigma factor is associated with the core the holoenzyme is formed, which can initiate transcription.

It is found in the plastid. It localises to the chloroplast. It catalyses the reaction RNA(n) + a ribonucleoside 5'-triphosphate = RNA(n+1) + diphosphate. In terms of biological role, DNA-dependent RNA polymerase catalyzes the transcription of DNA into RNA using the four ribonucleoside triphosphates as substrates. The sequence is that of DNA-directed RNA polymerase subunit alpha from Emiliania huxleyi (Coccolithophore).